Consider the following 126-residue polypeptide: Large ribosomal subunit protein bL12 (126 aa).

Basic and acidic residues predominate over residues 104-116 (AKKEDAEKAKAQL). Residues 104–126 (AKKEDAEKAKAQLEEAGATVELK) are disordered. Positions 117 to 126 (EEAGATVELK) are enriched in low complexity.

It belongs to the bacterial ribosomal protein bL12 family. Homodimer. Part of the ribosomal stalk of the 50S ribosomal subunit. Forms a multimeric L10(L12)X complex, where L10 forms an elongated spine to which 2 to 4 L12 dimers bind in a sequential fashion. Binds GTP-bound translation factors.

Its function is as follows. Forms part of the ribosomal stalk which helps the ribosome interact with GTP-bound translation factors. Is thus essential for accurate translation. This is Large ribosomal subunit protein bL12 from Bifidobacterium animalis subsp. lactis (strain AD011).